A 379-amino-acid polypeptide reads, in one-letter code: Pentatricopeptide repeat-containing protein At3g25210, mitochondrial (379 aa).

PPR repeat units lie at residues 142–177, 179–221, 222–256, 257–291, 292–326, and 327–361; these read SVPL…DDSK, DLET…GVIP, DTFV…GSEP, NAYT…GMVP, NGSC…SLSP, and DMLT…DPVM.

It belongs to the PPR family. P subfamily.

Its subcellular location is the mitochondrion. The sequence is that of Pentatricopeptide repeat-containing protein At3g25210, mitochondrial from Arabidopsis thaliana (Mouse-ear cress).